We begin with the raw amino-acid sequence, 415 residues long: Gamma-glutamyl phosphate reductase (415 aa).

This sequence belongs to the gamma-glutamyl phosphate reductase family.

Its subcellular location is the cytoplasm. It carries out the reaction L-glutamate 5-semialdehyde + phosphate + NADP(+) = L-glutamyl 5-phosphate + NADPH + H(+). It functions in the pathway amino-acid biosynthesis; L-proline biosynthesis; L-glutamate 5-semialdehyde from L-glutamate: step 2/2. Functionally, catalyzes the NADPH-dependent reduction of L-glutamate 5-phosphate into L-glutamate 5-semialdehyde and phosphate. The product spontaneously undergoes cyclization to form 1-pyrroline-5-carboxylate. The protein is Gamma-glutamyl phosphate reductase of Oceanobacillus iheyensis (strain DSM 14371 / CIP 107618 / JCM 11309 / KCTC 3954 / HTE831).